The chain runs to 346 residues: C5a anaphylatoxin chemotactic receptor 1 (346 aa).

At 1–33 the chain is on the extracellular side; it reads MDDNNSDWTSYDFGNDTIPSPNEISLSHIGTRH. N-linked (GlcNAc...) asparagine glycans are attached at residues asparagine 4 and asparagine 15. Residues 34-60 traverse the membrane as a helical segment; that stretch reads WITLVCYGIVFLLGVPGNALVVWVTGF. At 61-65 the chain is on the cytoplasmic side; the sequence is RMPNS. Residues 66–89 traverse the membrane as a helical segment; the sequence is VNAQWFLNLAIADLLCCLSLPILM. Residues 90–106 are Extracellular-facing; sequence VPLAQDQHWPFGALACK. Residues cysteine 105 and cysteine 183 are joined by a disulfide bond. A helical transmembrane segment spans residues 107 to 128; it reads LFSGIFYMMMYCSVLLLVVISL. Residues 129 to 149 lie on the Cytoplasmic side of the membrane; that stretch reads DRFLLVTKPVWCQNNRQPRQA. Residues 150–170 traverse the membrane as a helical segment; sequence RILCFIIWILGLLGSSPYFAH. At 171-194 the chain is on the extracellular side; the sequence is MEIQHHSETKTVCTGSYSSLGHAW. A helical transmembrane segment spans residues 195 to 220; that stretch reads AITIIRSFLFFLLPFLIICISHWKVY. Residues 221 to 238 are Cytoplasmic-facing; the sequence is HMTSSGRRQRDKSSRTLR. Residues 239–261 form a helical membrane-spanning segment; it reads VILALVLGFFLCWTPLHIVDLLI. The Extracellular segment spans residues 262–279; that stretch reads LVSDQPSERFEVNLNLAH. Residues 280–300 traverse the membrane as a helical segment; sequence VLTLCLAYINSCLNPLLYVCL. Residues 301 to 346 are Cytoplasmic-facing; it reads GRGFKENLISSLRSVLHFASEAPTHGPSMTTNSKSTTDGVFREKPV. A disordered region spans residues 323-346; sequence PTHGPSMTTNSKSTTDGVFREKPV. Polar residues predominate over residues 327–338; that stretch reads PSMTTNSKSTTD.

Belongs to the G-protein coupled receptor 1 family.

It localises to the cell membrane. In terms of biological role, receptor for the chemotactic and inflammatory peptide anaphylatoxin C5a. This receptor stimulates chemotaxis, granule enzyme release and superoxide anion production. In Danio rerio (Zebrafish), this protein is C5a anaphylatoxin chemotactic receptor 1 (c5ar1).